Consider the following 551-residue polypeptide: Chaperonin GroEL (551 aa).

ATP is bound by residues 30 to 33 (TLGP), K51, 87 to 91 (DGTTT), G415, 478 to 480 (NAA), and D494.

It belongs to the chaperonin (HSP60) family. Forms a cylinder of 14 subunits composed of two heptameric rings stacked back-to-back. Interacts with the co-chaperonin GroES.

The protein resides in the cytoplasm. The enzyme catalyses ATP + H2O + a folded polypeptide = ADP + phosphate + an unfolded polypeptide.. In terms of biological role, together with its co-chaperonin GroES, plays an essential role in assisting protein folding. The GroEL-GroES system forms a nano-cage that allows encapsulation of the non-native substrate proteins and provides a physical environment optimized to promote and accelerate protein folding. This chain is Chaperonin GroEL, found in Syntrophotalea carbinolica (strain DSM 2380 / NBRC 103641 / GraBd1) (Pelobacter carbinolicus).